A 988-amino-acid chain; its full sequence is Chloride channel protein 1 (988 aa).

The Cytoplasmic segment spans residues 1 to 118; the sequence is MEQSRSQQRG…VVRRKLGEDG (118 aa). A compositionally biased stretch (basic and acidic residues) spans 65–75; the sequence is HKEQFSDREQD. Residues 65–92 form a disordered region; it reads HKEQFSDREQDIGMPKKTGSSSTVDSKD. The helical transmembrane segment at 119-150 threads the bilayer; it reads IFLVLLGLLMALVSWSMDYVSAKSLQAYKWSY. At 151–158 the chain is on the extracellular side; it reads AQMQPSLP. A helical transmembrane segment spans residues 159–179; the sequence is LQFLVWVTFPLVLILFSALFC. Residues 180–183 are Cytoplasmic-facing; the sequence is HLIS. An intramembrane region (note=Loop between two helices) is located at residues 184–189; the sequence is PQAVGS. Residues 188 to 192 carry the Selectivity filter part_1 motif; that stretch reads GSGIP. A chloride-binding site is contributed by serine 189. The helical intramembrane region spans 190-195; sequence GIPEMK. Topologically, residues 196–208 are cytoplasmic; sequence TILRGVVLKEYLT. The segment at residues 209-224 is an intramembrane region (helical); that stretch reads MKAFVAKVVALTAGLG. The segment at residues 225–230 is an intramembrane region (note=Loop between two helices); it reads SGIPVG. A Selectivity filter part_2 motif is present at residues 230–234; sequence GKEGP. Positions 231–246 form an intramembrane region, helical; the sequence is KEGPFVHIASICAAVL. Topologically, residues 247 to 268 are cytoplasmic; the sequence is SKFMSVFCGVYEQPYYYSDILT. 2 consecutive intramembrane regions (helical) follow at residues 269 to 280 and 281 to 290; these read VGCAVGVGCCFG and TPLGGVLFSI. Over 291-301 the chain is Cytoplasmic; it reads EVTSTYFAVRN. A helical membrane pass occupies residues 302–321; it reads YWRGFFAATFSAFVFRVLAV. Residues 322-347 lie on the Extracellular side of the membrane; it reads WNKDAVTITALFRTNFRMDFPFDLKE. The helical transmembrane segment at 348–376 threads the bilayer; the sequence is LPAFAAIGICCGLLGAVFVYLHRQVMLGV. The Cytoplasmic segment spans residues 377–390; sequence RKHKALSQFLAKHR. The chain crosses the membrane as a helical span at residues 391-408; sequence LLYPGIVTFVIASFTFPP. At 409–414 the chain is on the extracellular side; it reads GMGQFM. Positions 415-418 form an intramembrane region, note=Loop between two helices; that stretch reads AGEL. Residues 419 to 426 constitute an intramembrane region (helical); it reads MPREAIST. Residues 427–457 are Extracellular-facing; the sequence is LFDNNTWVKHAGDPESLGQSAVWIHPRVNVV. Residues 458–475 constitute an intramembrane region (helical); it reads IIIFLFFVMKFWMSIVAT. The note=Loop between two helices intramembrane region spans 476–482; sequence TMPIPCG. Positions 482-486 match the Selectivity filter part_3 motif; the sequence is GGFMP. An intramembrane region (helical) is located at residues 483–498; sequence GFMPVFVLGAAFGRLV. Chloride is bound at residue phenylalanine 484. Residues 499–521 are Extracellular-facing; that stretch reads GEIMAMLFPDGILFDDIIYKILP. An intramembrane region (helical) is located at residues 522-538; the sequence is GGYAVIGAAALTGAVSH. Positions 539 to 540 form an intramembrane region, note=Loop between two helices; sequence TV. The helical intramembrane region spans 541-554; it reads STAVICFELTGQIA. At 555-557 the chain is on the extracellular side; the sequence is HIL. An intramembrane region (helical) is located at residues 558 to 571; sequence PMMVAVILANMVAQ. An intramembrane region (note=Loop between two helices) is located at residues 572-575; that stretch reads SLQP. Positions 576–578 form an intramembrane region, helical; sequence SLY. Tyrosine 578 serves as a coordination point for chloride. Residues 579 to 988 lie on the Cytoplasmic side of the membrane; it reads DSIIQVKKLP…DEEDEDELIL (410 aa). The region spanning 609-668 is the CBS 1 domain; it reads MVRDVKFVSASYTYGELRTLLQTTTVKTLPLVDSKDSMILLGSVERSELQALLQRHLCPE. The segment at 713–764 is disordered; it reads EDEDEDLSGKSELPPSLALHPSTTAPLSPEEPNGPLPGHKQQPEAPEPAGQR. A CBS 2 domain is found at 821–876; that stretch reads IDQSPFQLVEQTTLHKTHTLFSLLGLHLAYVTSMGKLRGVLALEELQKAIEGHTKS. The interval 880–988 is disordered; the sequence is LRPPLASFRN…DEEDEDELIL (109 aa). Serine 886 bears the Phosphoserine mark. The segment covering 887–906 has biased composition (polar residues); that stretch reads FRNTTSTRKSTGAPPSSAEN. The span at 929–941 shows a compositional bias: pro residues; that stretch reads TPVPSPSPEPPLS. 2 stretches are compositionally biased toward acidic residues: residues 950-967 and 979-988; these read ELEE…EELA and DEEDEDELIL.

Belongs to the chloride channel (TC 2.A.49) family. ClC-1/CLCN1 subfamily. Homodimer. Predominantly expressed in skeletal muscles.

It is found in the cell membrane. The protein localises to the sarcolemma. Its subcellular location is the T-tubule. It carries out the reaction chloride(in) = chloride(out). It catalyses the reaction thiocyanate(in) = thiocyanate(out). The catalysed reaction is bromide(in) = bromide(out). The enzyme catalyses nitrate(in) = nitrate(out). It carries out the reaction iodide(out) = iodide(in). Modulated by membrane voltage with depolarization favouring channel opening and hyperpolarization favouring channel closure. Inhibited by acidic pH and ATP binding due to a shift of voltage dependence of common gating to more positive voltages. Inhibited by 9-anthracene-carboxylic. Functionally, voltage-gated chloride channel involved in skeletal muscle excitability. Generates most of the plasma membrane chloride conductance in skeletal muscle fibers, stabilizes the resting membrane potential and contributes to the repolarization phase during action potential firing. Forms a homodimeric channel where each subunit has its own ion conduction pathway. Conducts double-barreled currents controlled by two types of gates, two fast glutamate gates that control each subunit independently and a slow common gate that opens and shuts off both subunits simultaneously. Has a significant open probability at muscle resting potential and is further activated upon membrane depolarization. Permeable to small monovalent anions with ion selectivity for chloride &gt; thiocyanate &gt; bromide &gt; nitrate &gt; iodide. The sequence is that of Chloride channel protein 1 from Homo sapiens (Human).